The chain runs to 147 residues: Transcriptional regulator MraZ (147 aa).

2 SpoVT-AbrB domains span residues G5–V51 and A80–K123.

The protein belongs to the MraZ family. Forms oligomers.

It is found in the cytoplasm. The protein localises to the nucleoid. In Nitrosospira multiformis (strain ATCC 25196 / NCIMB 11849 / C 71), this protein is Transcriptional regulator MraZ.